We begin with the raw amino-acid sequence, 191 residues long: Ankyrin repeat domain-containing protein 22 (191 aa).

ANK repeat units follow at residues 39-68 (NGDT…NVNL), 72-100 (KERT…MPVL), 101-130 (LIGY…EVNA), and 134-163 (YGCT…DPTI).

The protein is Ankyrin repeat domain-containing protein 22 (ANKRD22) of Homo sapiens (Human).